The chain runs to 645 residues: DEAD-box ATP-dependent RNA helicase 46 (645 aa).

Disordered regions lie at residues 1-22 (MAAT…KPWK) and 44-137 (YERP…AGNE). Positions 15–49 (PNLPKPWKGLVDSRTGYLYFWNPETNVTQYERPAS) constitute a WW domain. A compositionally biased stretch (low complexity) spans 60–72 (VSSSVQTNQQSSS). The segment covering 77-91 (GKEDDKYGRGSDGPK) has biased composition (basic and acidic residues). A compositionally biased stretch (low complexity) spans 108 to 136 (SSNDAASGLGNASSGGSSARGPPSSAAGN). The Q motif signature appears at 161–189 (MSFEATGLPNELLREVYSAGFSAPSPIQA). The 175-residue stretch at 192–366 (WPIAMQNRDI…ADLLVNPAQV (175 aa)) folds into the Helicase ATP-binding domain. 205 to 212 (AKTGSGKT) is an ATP binding site. Positions 314 to 317 (DEAD) match the DEAD box motif. In terms of domain architecture, Helicase C-terminal spans 395 to 539 (RLEQILRSQE…KVPPQVREMA (145 aa)). The interval 532 to 645 (PPQVREMATR…FHEAMMMKNR (114 aa)) is disordered. Residues 556–597 (SSGGGGGRGGYGDSGYGGRGESGYGSRGDSGYGGRGDSGGRG) are compositionally biased toward gly residues. Positions 598-608 (SWAPSRDSSGS) are enriched in low complexity. Positions 612–623 (GRERSRSPERFR) are enriched in basic and acidic residues. Positions 624-634 (GGPPSTSSPPR) are enriched in low complexity.

Belongs to the DEAD box helicase family. DDX5/DBP2 subfamily.

The catalysed reaction is ATP + H2O = ADP + phosphate + H(+). The chain is DEAD-box ATP-dependent RNA helicase 46 (RH46) from Arabidopsis thaliana (Mouse-ear cress).